A 370-amino-acid chain; its full sequence is Calcium-binding protein 1 (370 aa).

The segment at 1-198 (MGGGDGAAFK…GRGDSVPAAA (198 aa)) is disordered. G2 is lipidated: N-myristoyl glycine. A lipid anchor (S-palmitoyl cysteine) is attached at G4. Composition is skewed to low complexity over residues 50-61 (HASAGPAAMSSH), 68-84 (KTSLLKAAAAAASGGSR), and 148-157 (ALPAAASRPS). EF-hand domains follow at residues 225–260 (EEIEELREAFREFDKDKDGYINCRDLGNCMRTMGYM), 279–296 (GHVDFDDFVELMGPKLLA), 302–337 (IGVKELRDAFREFDTNGDGEISTSELREAMRKLLGH), and 339–370 (VGHRDIEEIIRDVDLNGDGRVDFEEFVRMMSR). Residues D238, D240, D242, Y244, and D249 each contribute to the Ca(2+) site. Mg(2+) contacts are provided by D238, D240, D242, and Y244. Positions 315, 317, 319, and 321 each coordinate Ca(2+). A Phosphoserine modification is found at S323. The Ca(2+) site is built by E326, D352, L353, N354, D356, G357, R358, D360, and E363.

Homodimer; when bound to calcium or magnesium. Interacts (via C-terminus) with ITPR1, ITPR2 and ITPR3. This binding is calcium dependent and the interaction correlates with calcium concentration. An additional calcium-independent interaction with the N-terminus of ITPR1 results in a decreased InsP(3) binding to the receptor. Interacts with CACNA1A (via C-terminal CDB motif) in the pre- and postsynaptic membranes. Interacts with CACNA1C (via C-terminal C and IQ motifs). The binding to the C motif is calcium independent whereas the binding to IQ requires the presence of calcium and is mutually exclusive with calmodulin binding. Interacts with CACNA1D. Interacts with TRPC5 (via C-terminus). Interacts (via EF-hands 1 and 2) at microtubules with MAP1LC3B. Interacts with MYO1C. Interacts (via EF-hands 1 and 2) with NSMF (via the central NLS-containing motif region), the interaction occurs in a calcium dependent manner after synaptic NMDA receptor stimulation and prevents nuclear import of NSMF. Interacts with SPACA9. Phosphorylated. The phosphorylation regulates the activity. Retina and brain. Somatodendritic compartment of neurons. Calbrain was found exclusively in brain where it is abundant in the hippocampus, habenular area in the epithalamus and in the cerebellum.

The protein localises to the cytoplasm. It localises to the cytoskeleton. The protein resides in the perinuclear region. Its subcellular location is the cell membrane. It is found in the golgi apparatus. The protein localises to the postsynaptic density. It localises to the cell cortex. In terms of biological role, modulates calcium-dependent activity of inositol 1,4,5-triphosphate receptors (ITPRs). Inhibits agonist-induced intracellular calcium signaling. Enhances inactivation and does not support calcium-dependent facilitation of voltage-dependent P/Q-type calcium channels. Causes calcium-dependent facilitation and inhibits inactivation of L-type calcium channels by binding to the same sites as calmodulin in the C-terminal domain of CACNA1C, but has an opposite effect on channel function. Suppresses the calcium-dependent inactivation of CACNA1D. Inhibits TRPC5 channels. Prevents NMDA receptor-induced cellular degeneration. Required for the normal transfer of light signals through the retina. The protein is Calcium-binding protein 1 (CABP1) of Homo sapiens (Human).